The primary structure comprises 282 residues: MEIECHAKVNLTLDVLGRRPDGYHEIRSVMVPVSLHDRLVLEPAEEEIVLESRPPATDRLEENLAYRAAALLREATGCSRGAVIRLQKTIPVAAGLAGGSTDAAGVLTGLNRLWGTGLSDGELADLAIRLGSDVPFFIWSRPARVEGIGERVTPLPVAGPLWMVVATPDVPKSTGQVYRWFDELADVGPRPDAGAMEAALARGDAAAVGRALCNVFEQVMLPRHPEIARLKEAMLAAGALGAVMSGAGPSVLGVVPDREAGGRLLERIRPLSRDAWVVRTLV.

Residue K8 is part of the active site. An ATP-binding site is contributed by 91–101; the sequence is PVAAGLAGGST. D133 is a catalytic residue.

The protein belongs to the GHMP kinase family. IspE subfamily.

The catalysed reaction is 4-CDP-2-C-methyl-D-erythritol + ATP = 4-CDP-2-C-methyl-D-erythritol 2-phosphate + ADP + H(+). It participates in isoprenoid biosynthesis; isopentenyl diphosphate biosynthesis via DXP pathway; isopentenyl diphosphate from 1-deoxy-D-xylulose 5-phosphate: step 3/6. In terms of biological role, catalyzes the phosphorylation of the position 2 hydroxy group of 4-diphosphocytidyl-2C-methyl-D-erythritol. The sequence is that of 4-diphosphocytidyl-2-C-methyl-D-erythritol kinase from Symbiobacterium thermophilum (strain DSM 24528 / JCM 14929 / IAM 14863 / T).